A 95-amino-acid chain; its full sequence is Large ribosomal subunit protein bL25 (95 aa).

Belongs to the bacterial ribosomal protein bL25 family. Part of the 50S ribosomal subunit; part of the 5S rRNA/L5/L18/L25 subcomplex. Contacts the 5S rRNA. Binds to the 5S rRNA independently of L5 and L18.

Functionally, this is one of the proteins that binds to the 5S RNA in the ribosome where it forms part of the central protuberance. This is Large ribosomal subunit protein bL25 from Shewanella woodyi (strain ATCC 51908 / MS32).